The chain runs to 336 residues: D-erythrose-4-phosphate dehydrogenase (336 aa).

11 to 12 (RI) contacts NAD(+). Residues 153–155 (SCT), arginine 199, 212–213 (TR), and arginine 235 each bind substrate. Cysteine 154 acts as the Nucleophile in catalysis. Residue asparagine 317 coordinates NAD(+).

This sequence belongs to the glyceraldehyde-3-phosphate dehydrogenase family. Epd subfamily. Homotetramer.

The protein resides in the cytoplasm. The enzyme catalyses D-erythrose 4-phosphate + NAD(+) + H2O = 4-phospho-D-erythronate + NADH + 2 H(+). It participates in cofactor biosynthesis; pyridoxine 5'-phosphate biosynthesis; pyridoxine 5'-phosphate from D-erythrose 4-phosphate: step 1/5. Catalyzes the NAD-dependent conversion of D-erythrose 4-phosphate to 4-phosphoerythronate. This is D-erythrose-4-phosphate dehydrogenase from Alteromonas mediterranea (strain DSM 17117 / CIP 110805 / LMG 28347 / Deep ecotype).